Here is a 276-residue protein sequence, read N- to C-terminus: Large ribosomal subunit protein uL2 (276 aa).

Positions Arg-28–Ser-38 are enriched in basic and acidic residues. 2 disordered regions span residues Arg-28–Gly-57 and Thr-219–Lys-276.

This sequence belongs to the universal ribosomal protein uL2 family. As to quaternary structure, part of the 50S ribosomal subunit. Forms a bridge to the 30S subunit in the 70S ribosome.

Functionally, one of the primary rRNA binding proteins. Required for association of the 30S and 50S subunits to form the 70S ribosome, for tRNA binding and peptide bond formation. It has been suggested to have peptidyltransferase activity; this is somewhat controversial. Makes several contacts with the 16S rRNA in the 70S ribosome. This is Large ribosomal subunit protein uL2 from Exiguobacterium sp. (strain ATCC BAA-1283 / AT1b).